The chain runs to 176 residues: Disulfide bond formation protein B (176 aa).

The Cytoplasmic portion of the chain corresponds to 1-13 (MQFLNTFSKSRIS). Residues 14–30 (WLLLLLCIVFFEGSALF) traverse the membrane as a helical segment. Residues 31–48 (FQHGMKLGPCVMCIYERV) lie on the Periplasmic side of the membrane. Cys-40 and Cys-43 are joined by a disulfide. Residues 49–64 (AMMGIAFAALLGAIAP) form a helical membrane-spanning segment. At 65–71 (QYAIIRW) the chain is on the cytoplasmic side. Residues 72–89 (AGLIAWGYSAVRGLQLSI) form a helical membrane-spanning segment. Residues 90–144 (EHVGYQFNPSPFATCDLFVQFPNWAPLNKWVPWMFEAYGNCAEVVWTFLGQSMPQ) are Periplasmic-facing. A disulfide bridge connects residues Cys-104 and Cys-130. Residues 145–163 (WLVIIFAGNLVALALIVIA) traverse the membrane as a helical segment. At 164 to 176 (QFFSKKTNTILDM) the chain is on the cytoplasmic side.

The protein belongs to the DsbB family.

The protein resides in the cell inner membrane. Functionally, required for disulfide bond formation in some periplasmic proteins. Acts by oxidizing the DsbA protein. The polypeptide is Disulfide bond formation protein B (Photobacterium profundum (strain SS9)).